The chain runs to 367 residues: Putrescine-binding periplasmic protein SpuD (367 aa).

A signal peptide spans 1 to 24; that stretch reads MMKRFGKTLLALTLAGSVAGMAQA. 36 to 37 provides a ligand contact to putrescine; it reads SD. Cys173 and Cys236 form a disulfide bridge. 2 residues coordinate putrescine: Asp244 and Asp275.

It belongs to the bacterial solute-binding protein PotD/PotF family.

It localises to the periplasm. The protein localises to the secreted. Its function is as follows. Putrescine-binding protein probably required for putrescine uptake into cells. Binds putrescine with high affinity, spermidine with relatively low affinity. Does not bind cadaverine or spermine. Putrescine binding induces large inter-domain conformational changes. The protein is Putrescine-binding periplasmic protein SpuD (spuD) of Pseudomonas aeruginosa (strain UCBPP-PA14).